The chain runs to 360 residues: Insulin gene enhancer protein ISL-2 (360 aa).

2 LIM zinc-binding domains span residues 25–86 (AMCV…RLFG) and 87–149 (IKCA…LLER). Residues 151–177 (AAGSPRSPGPLPGTPPGLHLPDAGSGQ) form a disordered region. Residues serine 154 and serine 157 each carry the phosphoserine modification. The segment at residues 192-251 (TTRVRTVLNEKQLHTLRTCYAANPRPDALMKEQLVEMTGLSPRVIRVWFQNKRCKDKKKS) is a DNA-binding region (homeobox). Residues 273–302 (GTLLVAGSPSAHENAVQGSAVEVQTYQPPW) are LIM-binding domain (LID). Serine 280 is subject to Phosphoserine. Residues 328-337 (SGSLGNSSGS) are compositionally biased toward low complexity. Positions 328-360 (SGSLGNSSGSDVTSLSSQLPDTPNSMVPSPVET) are disordered. Residues 338 to 360 (DVTSLSSQLPDTPNSMVPSPVET) show a composition bias toward polar residues.

Interacts with LHX4.

The protein localises to the nucleus. Its function is as follows. Transcriptional factor that defines subclasses of motoneurons that segregate into columns in the spinal cord and select distinct axon pathways. This Rattus norvegicus (Rat) protein is Insulin gene enhancer protein ISL-2 (Isl2).